The chain runs to 151 residues: Cytochrome c-type biogenesis protein CcmE (151 aa).

Over 1 to 8 the chain is Cytoplasmic; the sequence is MNPLRRKR. Residues 9-29 form a helical; Signal-anchor for type II membrane protein membrane-spanning segment; it reads LLIILAILVGVGVAVGLALSA. Residues 30–151 are Periplasmic-facing; sequence LQQNINLFYT…QSAPTPAKEG (122 aa). Heme contacts are provided by His-124 and Tyr-128.

It belongs to the CcmE/CycJ family.

Its subcellular location is the cell inner membrane. In terms of biological role, heme chaperone required for the biogenesis of c-type cytochromes. Transiently binds heme delivered by CcmC and transfers the heme to apo-cytochromes in a process facilitated by CcmF and CcmH. This is Cytochrome c-type biogenesis protein CcmE from Pseudomonas fluorescens biotype C.